The sequence spans 146 residues: 3-hydroxyacyl-[acyl-carrier-protein] dehydratase FabZ (146 aa).

Residue His49 is part of the active site.

This sequence belongs to the thioester dehydratase family. FabZ subfamily.

The protein localises to the cytoplasm. The catalysed reaction is a (3R)-hydroxyacyl-[ACP] = a (2E)-enoyl-[ACP] + H2O. Functionally, involved in unsaturated fatty acids biosynthesis. Catalyzes the dehydration of short chain beta-hydroxyacyl-ACPs and long chain saturated and unsaturated beta-hydroxyacyl-ACPs. This chain is 3-hydroxyacyl-[acyl-carrier-protein] dehydratase FabZ, found in Pseudomonas syringae pv. tomato (strain ATCC BAA-871 / DC3000).